The chain runs to 478 residues: tRNA (adenine(58)-N(1))-methyltransferase non-catalytic subunit TRM6 (478 aa).

The segment at 456-478 (SENATAADSSEKLAEHGAKKQKI) is disordered. The span at 464-478 (SSEKLAEHGAKKQKI) shows a compositional bias: basic and acidic residues.

This sequence belongs to the TRM6/GCD10 family. Heterotetramer; composed of two copies of TRM6/GCD10 and two copies of TRM61/GCD14.

It is found in the nucleus. Functionally, substrate-binding subunit of tRNA (adenine-N(1)-)-methyltransferase, which catalyzes the formation of N(1)-methyladenine at position 58 (m1A58) in initiator methionyl-tRNA. Also required for repression of GCN4 mRNA translation by the upstream open reading frames (uORFs) under conditions of amino acid sufficiency. This is tRNA (adenine(58)-N(1))-methyltransferase non-catalytic subunit TRM6 (GCD10) from Saccharomyces cerevisiae (strain ATCC 204508 / S288c) (Baker's yeast).